We begin with the raw amino-acid sequence, 394 residues long: 1-deoxy-D-xylulose 5-phosphate reductoisomerase (394 aa).

NADPH contacts are provided by Thr-12, Gly-13, Ser-14, Ile-15, Gly-38, Asn-41, and Asn-132. Lys-133 is a 1-deoxy-D-xylulose 5-phosphate binding site. Residue Glu-134 participates in NADPH binding. Residue Asp-156 participates in Mn(2+) binding. Positions 157, 158, 182, and 205 each coordinate 1-deoxy-D-xylulose 5-phosphate. A Mn(2+)-binding site is contributed by Glu-158. Gly-211 serves as a coordination point for NADPH. Ser-218, Asn-223, Lys-224, and Glu-227 together coordinate 1-deoxy-D-xylulose 5-phosphate. Position 227 (Glu-227) interacts with Mn(2+).

It belongs to the DXR family. It depends on Mg(2+) as a cofactor. The cofactor is Mn(2+).

It catalyses the reaction 2-C-methyl-D-erythritol 4-phosphate + NADP(+) = 1-deoxy-D-xylulose 5-phosphate + NADPH + H(+). It functions in the pathway isoprenoid biosynthesis; isopentenyl diphosphate biosynthesis via DXP pathway; isopentenyl diphosphate from 1-deoxy-D-xylulose 5-phosphate: step 1/6. Catalyzes the NADPH-dependent rearrangement and reduction of 1-deoxy-D-xylulose-5-phosphate (DXP) to 2-C-methyl-D-erythritol 4-phosphate (MEP). The sequence is that of 1-deoxy-D-xylulose 5-phosphate reductoisomerase from Pseudarthrobacter chlorophenolicus (strain ATCC 700700 / DSM 12829 / CIP 107037 / JCM 12360 / KCTC 9906 / NCIMB 13794 / A6) (Arthrobacter chlorophenolicus).